Consider the following 304-residue polypeptide: N-acetylmuramic acid 6-phosphate etherase (304 aa).

The SIS domain maps to 62 to 225 (IVEAFQQGGR…TTASMILIGK (164 aa)). The active-site Proton donor is glutamate 90. The active site involves glutamate 121.

It belongs to the GCKR-like family. MurNAc-6-P etherase subfamily. In terms of assembly, homodimer.

It carries out the reaction N-acetyl-D-muramate 6-phosphate + H2O = N-acetyl-D-glucosamine 6-phosphate + (R)-lactate. The protein operates within amino-sugar metabolism; 1,6-anhydro-N-acetylmuramate degradation. It functions in the pathway amino-sugar metabolism; N-acetylmuramate degradation. It participates in cell wall biogenesis; peptidoglycan recycling. Specifically catalyzes the cleavage of the D-lactyl ether substituent of MurNAc 6-phosphate, producing GlcNAc 6-phosphate and D-lactate. Together with AnmK, is also required for the utilization of anhydro-N-acetylmuramic acid (anhMurNAc) either imported from the medium or derived from its own cell wall murein, and thus plays a role in cell wall recycling. This is N-acetylmuramic acid 6-phosphate etherase from Glaesserella parasuis serovar 5 (strain SH0165) (Haemophilus parasuis).